A 494-amino-acid polypeptide reads, in one-letter code: Endoglucanase 22 (494 aa).

The N-terminal stretch at 1 to 21 (MKPLVCSFIVILLILLPTTIS) is a signal peptide. Aspartate 76 functions as the Nucleophile in the catalytic mechanism. Histidine 413 is an active-site residue. The N-linked (GlcNAc...) asparagine glycan is linked to asparagine 468. Residue glutamate 473 is part of the active site.

This sequence belongs to the glycosyl hydrolase 9 (cellulase E) family.

It localises to the secreted. The enzyme catalyses Endohydrolysis of (1-&gt;4)-beta-D-glucosidic linkages in cellulose, lichenin and cereal beta-D-glucans.. The chain is Endoglucanase 22 (GH9B16) from Arabidopsis thaliana (Mouse-ear cress).